Reading from the N-terminus, the 157-residue chain is Baculoviral IAP repeat-containing protein 5.2-A (157 aa).

The BIR repeat unit spans residues 31–101; that stretch reads RLRTFSNWPF…KHSPSCLFIA (71 aa). Position 47 is a phosphothreonine; by CDK1 (Thr47). Cys70, Cys73, His90, and Cys97 together coordinate Zn(2+).

This sequence belongs to the IAP family. In terms of assembly, component of the CPC at least composed of survivin/birc5, incenp, cdca8/borealin and/or cdca9/dasra-A, and aurkb/aurora-B. Interacts directly with incenp (via N-terminus). Interacts with rxra; the interaction is stronger in the absence of 9-cis retinoic acids. In terms of processing, ubiquitination is required for centrosome-targeting. As to expression, highly expressed in vascular endothelial cells of tadpoles.

It is found in the cytoplasm. Its subcellular location is the nucleus. It localises to the chromosome. The protein localises to the centromere. The protein resides in the cytoskeleton. It is found in the spindle. Its function is as follows. Component of the chromosomal passenger complex (CPC), a complex that acts as a key regulator of mitosis. The CPC complex has essential functions at the centromere in ensuring correct chromosome alignment and segregation and is required for chromatin-induced microtubule stabilization and spindle assembly. Does not appear to exhibit anti-apoptotic activity. Plays a role in increasing blood vessel size during development. The chain is Baculoviral IAP repeat-containing protein 5.2-A (birc5.2-a) from Xenopus laevis (African clawed frog).